The sequence spans 154 residues: MSPAKVDTTKKADPKAKALKAAKAVKSGQAFKKKDKKIRTKVTFHRPKTLTKPRTGKYPKISATPRNKLDHYQILKYPLTTESAMKKIEDNNTLVFIVDIRADKKKIKDAVKKMYDIQTKKVNTLIRPDGTKKAYVRLTPDYDALDVANKIGII.

This sequence belongs to the universal ribosomal protein uL23 family.

Its function is as follows. Binds to a specific region on the 26S rRNA. The chain is Large ribosomal subunit protein uL23z (RPL23AA) from Arabidopsis thaliana (Mouse-ear cress).